A 205-amino-acid chain; its full sequence is Sarcosine oxidase subunit gamma (205 aa).

The protein belongs to the SoxG family. In terms of assembly, heterotetramer composed of subunits alpha (SoxA), beta (SoxB), gamma (SoxG) and delta (SoxD).

The protein resides in the cytoplasm. It carries out the reaction sarcosine + (6S)-5,6,7,8-tetrahydrofolate + O2 = (6R)-5,10-methylene-5,6,7,8-tetrahydrofolate + glycine + H2O2. The enzyme catalyses sarcosine + O2 + H2O = formaldehyde + glycine + H2O2. With respect to regulation, inhibited by Zn(2+), Cu(2+), Cd(2+), Hg(2+), Ag(+), p-chloromercuribenzoate (p-CMB), iodoacetamide, N-ethylmaleimide, CN(-), o-phenanthroline and sodium lauryl sulfate. Functionally, in the presence of tetrahydrofolate, catalyzes the oxidative demethylation of sarcosine to yield glycine, 5,10-methylenetetrahydrofolate and hydrogen peroxide. In the absence of tetrahydrofolate, catalyzes the oxidative demethylation of sarcosine to yield glycine, formaldehyde and hydrogen peroxide. Can also use N-methyl-L-alanine and N-ethyl-L-glycine. Is very specific for oxygen as an acceptor. This chain is Sarcosine oxidase subunit gamma, found in Corynebacterium sp. (strain U-96).